The chain runs to 65 residues: Large ribosomal subunit protein bL33 (65 aa).

Residues 20–42 are disordered; sequence APASEKRSPGVSRYTTEKNRRNT.

This sequence belongs to the bacterial ribosomal protein bL33 family.

The protein is Large ribosomal subunit protein bL33 of Prochlorococcus marinus (strain SARG / CCMP1375 / SS120).